We begin with the raw amino-acid sequence, 186 residues long: dCTP deaminase (186 aa).

Residue 107–112 (KSSYAR) participates in dCTP binding. The active-site Proton donor/acceptor is glutamate 133. Positions 152, 166, and 176 each coordinate dCTP.

The protein belongs to the dCTP deaminase family. As to quaternary structure, homotrimer.

It carries out the reaction dCTP + H2O + H(+) = dUTP + NH4(+). It participates in pyrimidine metabolism; dUMP biosynthesis; dUMP from dCTP (dUTP route): step 1/2. Catalyzes the deamination of dCTP to dUTP. This chain is dCTP deaminase, found in Chloroflexus aggregans (strain MD-66 / DSM 9485).